Reading from the N-terminus, the 843-residue chain is Taste receptor type 1 member 2 (843 aa).

Positions 1 to 19 (MGPQARTLHLLFLLLHALP) are cleaved as a signal peptide. The Extracellular segment spans residues 20–570 (KPVMLVGNSD…AFLEWHEVPT (551 aa)). Asparagine 87, asparagine 296, asparagine 316, asparagine 355, asparagine 372, asparagine 432, asparagine 484, asparagine 491, and asparagine 531 each carry an N-linked (GlcNAc...) asparagine glycan. The chain crosses the membrane as a helical span at residues 571–591 (IVVTILAALGFISTLAILLIF). The Cytoplasmic segment spans residues 592–606 (WRHFQTPMVRSAGGP). A helical transmembrane segment spans residues 607 to 627 (MCFLMLVPLLLAFGMVPVYVG). Residues 628–642 (PPTVFSCFCRQAFFT) lie on the Extracellular side of the membrane. Residues 643-663 (VCFSVCLSCITVRSFQIVCVF) traverse the membrane as a helical segment. Residues 664 to 682 (KMARRLPSAYGFWMRYHGP) are Cytoplasmic-facing. The helical transmembrane segment at 683–703 (YVFVAFITAVKVALVAGNMLA) threads the bilayer. At 704–731 (TTINPIGRTDPDDPNIIILSCHPNYRNG) the chain is on the extracellular side. The helical transmembrane segment at 732–752 (LLFNTSMDLLLSVLGFSFAYV) threads the bilayer. The Cytoplasmic segment spans residues 753–764 (GKELPTNYNEAK). The helical transmembrane segment at 765–785 (FITLSMTFSFTSSISLCTFMS) threads the bilayer. Residues 786 to 789 (VHDG) lie on the Extracellular side of the membrane. A helical transmembrane segment spans residues 790-810 (VLVTIMDLLVTVLNFLAIGLG). Topologically, residues 811–843 (YFGPKCYMILFYPERNTSAYFNSMIQGYTMRKS) are cytoplasmic.

It belongs to the G-protein coupled receptor 3 family. TAS1R subfamily. As to quaternary structure, forms heterodimers with TAS1R3. Expressed mainly in circumvallate and foliate taste papillae.

The protein resides in the cell membrane. Its function is as follows. Putative taste receptor. TAS1R2/TAS1R3 recognizes diverse natural and synthetic sweeteners. The chain is Taste receptor type 1 member 2 (Tas1r2) from Mus musculus (Mouse).